A 363-amino-acid polypeptide reads, in one-letter code: Endopolygalacturonase B (363 aa).

A signal peptide spans 1-20; the sequence is MQLLQSSVIAATVGAALVAA. Positions 21-28 are excised as a propeptide; it reads VPVELKAR. Cysteines 31 and 46 form a disulfide. PbH1 repeat units lie at residues 158 to 187, 188 to 209, 210 to 230, 239 to 260, 268 to 290, and 302 to 347; these read SDNL…DVGS, STYI…AINS, GSHI…SIGS, VEDV…RIKT, VSNV…IVEQ, and TNGI…SITG. Residue asparagine 162 is glycosylated (N-linked (GlcNAc...) asparagine). The active-site Proton donor is aspartate 202. Cysteine 204 and cysteine 220 are joined by a disulfide. The active site involves histidine 224. 2 disulfides stabilise this stretch: cysteine 330–cysteine 335 and cysteine 354–cysteine 363. N-linked (GlcNAc...) asparagine glycosylation occurs at asparagine 356.

The protein belongs to the glycosyl hydrolase 28 family.

The protein resides in the secreted. It carries out the reaction (1,4-alpha-D-galacturonosyl)n+m + H2O = (1,4-alpha-D-galacturonosyl)n + (1,4-alpha-D-galacturonosyl)m.. Involved in maceration and soft-rotting of plant tissue. Hydrolyzes the 1,4-alpha glycosidic bonds of de-esterified pectate in the smooth region of the plant cell wall. The sequence is that of Endopolygalacturonase B (pgaB) from Aspergillus oryzae (strain ATCC 42149 / RIB 40) (Yellow koji mold).